Reading from the N-terminus, the 289-residue chain is Glycine--tRNA ligase alpha subunit (289 aa).

The protein belongs to the class-II aminoacyl-tRNA synthetase family. Tetramer of two alpha and two beta subunits.

The protein localises to the cytoplasm. It catalyses the reaction tRNA(Gly) + glycine + ATP = glycyl-tRNA(Gly) + AMP + diphosphate. The polypeptide is Glycine--tRNA ligase alpha subunit (Prochlorococcus marinus (strain MIT 9515)).